The following is a 303-amino-acid chain: N-acetylmuramic acid 6-phosphate etherase (303 aa).

The SIS domain occupies 62-225 (IVAAFRQGGR…TTASMVLLGK (164 aa)). E90 serves as the catalytic Proton donor. The active site involves E121.

It belongs to the GCKR-like family. MurNAc-6-P etherase subfamily. In terms of assembly, homodimer.

It catalyses the reaction N-acetyl-D-muramate 6-phosphate + H2O = N-acetyl-D-glucosamine 6-phosphate + (R)-lactate. The protein operates within amino-sugar metabolism; 1,6-anhydro-N-acetylmuramate degradation. It participates in amino-sugar metabolism; N-acetylmuramate degradation. It functions in the pathway cell wall biogenesis; peptidoglycan recycling. Specifically catalyzes the cleavage of the D-lactyl ether substituent of MurNAc 6-phosphate, producing GlcNAc 6-phosphate and D-lactate. Together with AnmK, is also required for the utilization of anhydro-N-acetylmuramic acid (anhMurNAc) either imported from the medium or derived from its own cell wall murein, and thus plays a role in cell wall recycling. This is N-acetylmuramic acid 6-phosphate etherase from Histophilus somni (strain 129Pt) (Haemophilus somnus).